A 149-amino-acid polypeptide reads, in one-letter code: L-alanine exporter AlaE (149 aa).

The next 4 membrane-spanning stretches (helical) occupy residues 16–36, 46–66, 85–105, and 112–132; these read FAMVVYCSVVNMLIEIFLSGM, LVAIPVNILIAWPYGMYRDAI, VLAYVTFQSPVYVAILLTVGA, and AAVSSNIVISMLMGAVYGYFL.

The protein belongs to the AlaE exporter family.

The protein resides in the cell inner membrane. Its function is as follows. Exports L-alanine. This Citrobacter koseri (strain ATCC BAA-895 / CDC 4225-83 / SGSC4696) protein is L-alanine exporter AlaE.